The chain runs to 63 residues: Cytochrome c oxidase subunit 5C (63 aa).

The chain crosses the membrane as a helical span at residues 16–34 (VVKEICIGLTLGLVAGGLW).

It belongs to the cytochrome c oxidase subunit 5C family.

It localises to the mitochondrion inner membrane. In terms of biological role, this protein is one of the nuclear-coded polypeptide chains of cytochrome c oxidase, the terminal oxidase in mitochondrial electron transport. In Oryza sativa subsp. japonica (Rice), this protein is Cytochrome c oxidase subunit 5C (COX5C).